The primary structure comprises 429 residues: Glutamate-1-semialdehyde 2,1-aminomutase 2 (429 aa).

An N6-(pyridoxal phosphate)lysine modification is found at Lys-268.

It belongs to the class-III pyridoxal-phosphate-dependent aminotransferase family. HemL subfamily. As to quaternary structure, homodimer. It depends on pyridoxal 5'-phosphate as a cofactor.

Its subcellular location is the cytoplasm. It carries out the reaction (S)-4-amino-5-oxopentanoate = 5-aminolevulinate. Its pathway is porphyrin-containing compound metabolism; protoporphyrin-IX biosynthesis; 5-aminolevulinate from L-glutamyl-tRNA(Glu): step 2/2. The sequence is that of Glutamate-1-semialdehyde 2,1-aminomutase 2 from Bacillus velezensis (strain DSM 23117 / BGSC 10A6 / LMG 26770 / FZB42) (Bacillus amyloliquefaciens subsp. plantarum).